The primary structure comprises 246 residues: MKYTVDTHTHTVASTHAYSTIHDYLPIAKAKGIKLFATTDHGPDMADAPHFWHFVNLHVLPRVVDGVGILRGIEANIKNIDGEIDFPERYESRLDMIMAGFHEPVFPPCDQATHTQAMINAIKSGRVDMISHPGNPAFPIDIQAVVKAAAEYRVALELNNSSFSHSRPGSEGNCRAIVEAARDMGAYLTFGSDSHVAFSLGDFEHCHRLVTEAGFPAERILARSPRALLDFLESRGRAHIPEFADL.

9 residues coordinate Zn(2+): histidine 8, histidine 10, histidine 16, histidine 41, glutamate 74, histidine 102, histidine 132, aspartate 193, and histidine 195.

It belongs to the PHP family. Requires Zn(2+) as cofactor.

The sequence is that of Probable phosphatase AHA_1344 from Aeromonas hydrophila subsp. hydrophila (strain ATCC 7966 / DSM 30187 / BCRC 13018 / CCUG 14551 / JCM 1027 / KCTC 2358 / NCIMB 9240 / NCTC 8049).